The chain runs to 110 residues: Large ribosomal subunit protein uL22 (110 aa).

Belongs to the universal ribosomal protein uL22 family. Part of the 50S ribosomal subunit.

In terms of biological role, this protein binds specifically to 23S rRNA; its binding is stimulated by other ribosomal proteins, e.g. L4, L17, and L20. It is important during the early stages of 50S assembly. It makes multiple contacts with different domains of the 23S rRNA in the assembled 50S subunit and ribosome. The globular domain of the protein is located near the polypeptide exit tunnel on the outside of the subunit, while an extended beta-hairpin is found that lines the wall of the exit tunnel in the center of the 70S ribosome. The chain is Large ribosomal subunit protein uL22 from Variovorax paradoxus (strain S110).